A 485-amino-acid chain; its full sequence is Hexokinase (485 aa).

Ser-15 carries the phosphoserine modification. The Hexokinase domain occupies 21 to 468; it reads ANLMEQIHGL…SGVGAAIIAC (448 aa). The tract at residues 75 to 208 is hexokinase small subdomain; it reads TGKETGDFLA…NIPINVVALI (134 aa). Lys-111 serves as a coordination point for ATP. Residues 151–177 are glucose-binding; sequence PLGFTFSYPASQKKINSGVLQRWTKGF. Residues 209-457 form a hexokinase large subdomain region; the sequence is NDTTGTLVAS…HPIQLVAAED (249 aa).

As to quaternary structure, monomer and homodimer. The monomeric form is active, the homodimeric form inactive.

It catalyses the reaction a D-hexose + ATP = a D-hexose 6-phosphate + ADP + H(+). The enzyme catalyses D-fructose + ATP = D-fructose 6-phosphate + ADP + H(+). The catalysed reaction is D-glucose + ATP = D-glucose 6-phosphate + ADP + H(+). The protein operates within carbohydrate metabolism; hexose metabolism. Its pathway is carbohydrate degradation; glycolysis; D-glyceraldehyde 3-phosphate and glycerone phosphate from D-glucose: step 1/4. In terms of biological role, catalyzes the phosphorylation of hexose, such as D-glucose and D-fructose, to hexose 6-phosphate (D-glucose 6-phosphate and D-fructose 6-phosphate, respectively). Has higher affinity for D-glucose. Mediates the initial step of glycolysis by catalyzing phosphorylation of D-glucose to D-glucose 6-phosphate. This chain is Hexokinase (RAG5), found in Kluyveromyces lactis (strain ATCC 8585 / CBS 2359 / DSM 70799 / NBRC 1267 / NRRL Y-1140 / WM37) (Yeast).